The chain runs to 638 residues: 1-deoxy-D-xylulose-5-phosphate synthase (638 aa).

Residues H78 and 119-121 contribute to the thiamine diphosphate site; that span reads GHS. D151 contacts Mg(2+). Thiamine diphosphate contacts are provided by residues 152–153, N180, Y289, and E371; that span reads GA. N180 lines the Mg(2+) pocket.

Belongs to the transketolase family. DXPS subfamily. As to quaternary structure, homodimer. Mg(2+) serves as cofactor. The cofactor is thiamine diphosphate.

The catalysed reaction is D-glyceraldehyde 3-phosphate + pyruvate + H(+) = 1-deoxy-D-xylulose 5-phosphate + CO2. It functions in the pathway metabolic intermediate biosynthesis; 1-deoxy-D-xylulose 5-phosphate biosynthesis; 1-deoxy-D-xylulose 5-phosphate from D-glyceraldehyde 3-phosphate and pyruvate: step 1/1. Functionally, catalyzes the acyloin condensation reaction between C atoms 2 and 3 of pyruvate and glyceraldehyde 3-phosphate to yield 1-deoxy-D-xylulose-5-phosphate (DXP). The chain is 1-deoxy-D-xylulose-5-phosphate synthase from Bartonella bacilliformis (strain ATCC 35685 / KC583 / Herrer 020/F12,63).